Consider the following 47-residue polypeptide: Defensin-like protein 2 (47 aa).

4 cysteine pairs are disulfide-bonded: cysteine 3–cysteine 47, cysteine 14–cysteine 36, cysteine 20–cysteine 41, and cysteine 24–cysteine 43.

This sequence belongs to the DEFL family.

The polypeptide is Defensin-like protein 2 (Zea mays (Maize)).